A 147-amino-acid polypeptide reads, in one-letter code: Large ribosomal subunit protein uL13 (147 aa).

Belongs to the universal ribosomal protein uL13 family. Part of the 50S ribosomal subunit.

This protein is one of the early assembly proteins of the 50S ribosomal subunit, although it is not seen to bind rRNA by itself. It is important during the early stages of 50S assembly. This Rhodococcus erythropolis (strain PR4 / NBRC 100887) protein is Large ribosomal subunit protein uL13.